Reading from the N-terminus, the 206-residue chain is Large ribosomal subunit protein uL4 (206 aa).

Belongs to the universal ribosomal protein uL4 family. In terms of assembly, part of the 50S ribosomal subunit.

Its function is as follows. One of the primary rRNA binding proteins, this protein initially binds near the 5'-end of the 23S rRNA. It is important during the early stages of 50S assembly. It makes multiple contacts with different domains of the 23S rRNA in the assembled 50S subunit and ribosome. In terms of biological role, forms part of the polypeptide exit tunnel. This is Large ribosomal subunit protein uL4 from Methylorubrum extorquens (strain CM4 / NCIMB 13688) (Methylobacterium extorquens).